The sequence spans 268 residues: 4-diphosphocytidyl-2-C-methyl-D-erythritol kinase (268 aa).

The active site involves lysine 10. Proline 101–threonine 111 contributes to the ATP binding site. Aspartate 143 is a catalytic residue.

The protein belongs to the GHMP kinase family. IspE subfamily.

The catalysed reaction is 4-CDP-2-C-methyl-D-erythritol + ATP = 4-CDP-2-C-methyl-D-erythritol 2-phosphate + ADP + H(+). The protein operates within isoprenoid biosynthesis; isopentenyl diphosphate biosynthesis via DXP pathway; isopentenyl diphosphate from 1-deoxy-D-xylulose 5-phosphate: step 3/6. Its function is as follows. Catalyzes the phosphorylation of the position 2 hydroxy group of 4-diphosphocytidyl-2C-methyl-D-erythritol. The protein is 4-diphosphocytidyl-2-C-methyl-D-erythritol kinase of Helicobacter pylori (strain ATCC 700392 / 26695) (Campylobacter pylori).